An 85-amino-acid chain; its full sequence is uncharacterized protein (85 aa).

This is an uncharacterized protein from Methanocaldococcus jannaschii (strain ATCC 43067 / DSM 2661 / JAL-1 / JCM 10045 / NBRC 100440) (Methanococcus jannaschii).